A 557-amino-acid chain; its full sequence is MKCQTCHLPLQLDPSLEGLSLTQRNLLLSNNSIITATNENVISNKGIEAADNCGPQIPKERLRRLGEIQNIKDLNLKDDKLITDSFVFLNHDDDDNANITSNSREDQRYGNANGNDNKKANSDTSDGTSTFRDHDEEEQEATDEDENQQIQLNSKTLSTQVNAMTNVFNILSSQTNIDFPICQDCCNILINRLKSEYDDAIKERDTYAQFLSKLESQNKEISESNKEKQYSHNLSEKENLKKEEERLLDQLLRLEMTDDDLDGELVRLQEKKVQLENEKLQKLSDQNLMDLNNIQFNKNLQSLKLQYELSLNQLDKLRKINIFNATFKISHSGPFATINGLRLGSIPESVVPWKEINAALGQLILLLATINKNLKINLVDYELQPMGSFSKIKKRMVNSVEYNNSTTNAPGDWLILPVYYDENFNLGRIFRKETKFDKSLETTLEIISEITRQLSTIASSYSSQTLTTSQDESSMNNANDVENSTSILELPYIMNKDKINGLSVKLHGSSPNLEWTTAMKFLLTNVKWLLAFSSNLLSKSITLSPTVNYNDKTISGN.

Disordered regions lie at residues 93–149 and 218–238; these read DDDN…ENQQ and NKEI…SEKE. A compositionally biased stretch (acidic residues) spans 135-147; sequence DEEEQEATDEDEN. T142 is modified (phosphothreonine). Positions 189 to 322 form a coiled coil; the sequence is LINRLKSEYD…QLDKLRKINI (134 aa). The segment at 320–539 is BARA; that stretch reads INIFNATFKI…LAFSSNLLSK (220 aa). The segment at 515–540 is required for membrane-association, autophagic function during starvation and normal autophagosome morphology; it reads WTTAMKFLLTNVKWLLAFSSNLLSKS.

This sequence belongs to the beclin family. As to quaternary structure, component of the autophagy-specific VPS34 PI3-kinase complex I composed of VPS15, VPS30, VPS34, ATG14 and ATG38; and of the VPS34 PI3-kinase complex II composed of VPS15, VPS30, VPS34 and VPS38.

Its subcellular location is the endosome membrane. The protein localises to the vacuole membrane. It localises to the preautophagosomal structure membrane. Its function is as follows. Required for cytoplasm to vacuole transport (Cvt), autophagy, nucleophagy, and mitophagy, as a part of the autophagy-specific VPS34 PI3-kinase complex I. This complex is essential to recruit the ATG8-phosphatidylinositol conjugate and the ATG12-ATG5 conjugate to the pre-autophagosomal structure. Also involved in endosome-to-Golgi retrograde transport as part of the VPS34 PI3-kinase complex II. This second complex is required for the endosome-to-Golgi retrieval of PEP1 and KEX2, and the recruitment of VPS5 and VPS7, two components of the retromer complex, to endosomal membranes (probably through the synthesis of a specific pool of phosphatidylinositol 3-phosphate recruiting the retromer to the endosomes). Also plays a role in regulation of filamentous growth. The polypeptide is Vacuolar protein sorting-associated protein 30 (Saccharomyces cerevisiae (strain ATCC 204508 / S288c) (Baker's yeast)).